A 201-amino-acid polypeptide reads, in one-letter code: Anthranilate synthase component II (201 aa).

Residues 3-196 (DILLLDNIDS…LAWAQRKLEP (194 aa)) enclose the Glutamine amidotransferase type-1 domain. Residue 57–59 (GPG) participates in L-glutamine binding. Cysteine 84 functions as the Nucleophile; for GATase activity in the catalytic mechanism. Residues glutamine 88 and 134 to 135 (SL) contribute to the L-glutamine site. Catalysis depends on for GATase activity residues histidine 170 and glutamate 172.

In terms of assembly, tetramer of two components I and two components II.

It catalyses the reaction chorismate + L-glutamine = anthranilate + pyruvate + L-glutamate + H(+). The catalysed reaction is N-(5-phospho-beta-D-ribosyl)anthranilate + diphosphate = 5-phospho-alpha-D-ribose 1-diphosphate + anthranilate. The protein operates within amino-acid biosynthesis; L-tryptophan biosynthesis; L-tryptophan from chorismate: step 1/5. It functions in the pathway amino-acid biosynthesis; L-tryptophan biosynthesis; L-tryptophan from chorismate: step 2/5. The chain is Anthranilate synthase component II (trpG-TRPD) from Shigella dysenteriae.